A 452-amino-acid polypeptide reads, in one-letter code: Trigger factor (452 aa).

Residues 171-256 enclose the PPIase FKBP-type domain; the sequence is GDRVTISFKG…ATKVEAPQDT (86 aa).

Belongs to the FKBP-type PPIase family. Tig subfamily.

It localises to the cytoplasm. It carries out the reaction [protein]-peptidylproline (omega=180) = [protein]-peptidylproline (omega=0). Functionally, involved in protein export. Acts as a chaperone by maintaining the newly synthesized protein in an open conformation. Functions as a peptidyl-prolyl cis-trans isomerase. The sequence is that of Trigger factor from Rhodopseudomonas palustris (strain HaA2).